Reading from the N-terminus, the 145-residue chain is Peptide methionine sulfoxide reductase MsrB (145 aa).

Positions 6-129 (KNERLKQLTD…NSAALRFIPV (124 aa)) constitute a MsrB domain. Cys118 functions as the Nucleophile in the catalytic mechanism.

Belongs to the MsrB Met sulfoxide reductase family.

It catalyses the reaction L-methionyl-[protein] + [thioredoxin]-disulfide + H2O = L-methionyl-(R)-S-oxide-[protein] + [thioredoxin]-dithiol. The protein is Peptide methionine sulfoxide reductase MsrB of Listeria innocua serovar 6a (strain ATCC BAA-680 / CLIP 11262).